A 118-amino-acid polypeptide reads, in one-letter code: Ribosome-binding factor A (118 aa).

Belongs to the RbfA family. Monomer. Binds 30S ribosomal subunits, but not 50S ribosomal subunits or 70S ribosomes.

The protein localises to the cytoplasm. In terms of biological role, one of several proteins that assist in the late maturation steps of the functional core of the 30S ribosomal subunit. Associates with free 30S ribosomal subunits (but not with 30S subunits that are part of 70S ribosomes or polysomes). Required for efficient processing of 16S rRNA. May interact with the 5'-terminal helix region of 16S rRNA. This is Ribosome-binding factor A from Bacillus cereus (strain AH187).